The following is a 134-amino-acid chain: Mini-ribonuclease 3 (134 aa).

The active site involves D22.

It belongs to the MrnC RNase family. In terms of assembly, homodimer. Requires Mg(2+) as cofactor.

It localises to the cytoplasm. Involved in correct processing of both the 5' and 3' ends of 23S rRNA precursor. Processes 30S rRNA precursor transcript even in absence of ribonuclease 3 (Rnc); Rnc processes 30S rRNA into smaller rRNA precursors. The sequence is that of Mini-ribonuclease 3 from Staphylococcus aureus (strain NCTC 8325 / PS 47).